The following is a 564-amino-acid chain: Hexose transporter HXT13 (564 aa).

Over 1 to 52 (MSSAQSSIDSDGDVRDADIHVAPPVEKEWSDGFDDNEVINGDNVEPPKRGLI) the chain is Cytoplasmic. The chain crosses the membrane as a helical span at residues 53–73 (GYLVIYLLCYPISFGGFLPGW). The Extracellular segment spans residues 74–109 (DSGITAGFINMDNFKMNFGSYKHSTGEYYLSNVRMG). Residues 110-130 (LLVAMFSIGCAIGGLIFARLA) traverse the membrane as a helical segment. Topologically, residues 131–136 (DTLGRR) are cytoplasmic. A helical transmembrane segment spans residues 137-157 (LAIVIVVLVYMVGAIIQISSN). Topologically, residues 158-167 (HKWYQYFVGK) are extracellular. A helical transmembrane segment spans residues 168-188 (IIYGLGAGGCSVLCPMLLSEI). The Cytoplasmic segment spans residues 189 to 194 (APTDLR). The chain crosses the membrane as a helical span at residues 195 to 215 (GGLVSLYQLNMTFGIFLGYCS). Over 216–229 (VYGTRKYDNTAQWR) the chain is Extracellular. A helical transmembrane segment spans residues 230–250 (VPLGLCFLWALIIIIGMLLVP). Topologically, residues 251–333 (ESPRYLIECE…VQTFLQLTGE (83 aa)) are cytoplasmic. A helical transmembrane segment spans residues 334 to 350 (NYFFFYGTTIFKSVGLT). The Extracellular segment spans residues 351–356 (DGFETS). A helical membrane pass occupies residues 357-374 (IVLGTVNFFSTIIAVMVV). Residues 375-381 (DKIGRRK) are Cytoplasmic-facing. A helical membrane pass occupies residues 382–402 (CLLFGAAGMMACMVIFASIGV). At 403–424 (KCLYPHGQDGPSSKGAGNAMIV) the chain is on the extracellular side. Residues 425 to 445 (FTCFYIFCFATTWAPVAYIVV) form a helical membrane-spanning segment. Residues 446–462 (AESFPSKVKSRAMSIST) lie on the Cytoplasmic side of the membrane. Residues 463-483 (ACNWLWQFLIGFFTPFITGSI) form a helical membrane-spanning segment. Position 484 (H484) is a topological domain, extracellular. A helical transmembrane segment spans residues 485-505 (FYYGYVFVGCLVAMFLYVFFF). The Cytoplasmic segment spans residues 506 to 564 (LPETIGLSLEEIQLLYEEGIKPWKSASWVPPSRRGISSEESKTEKKDWKKFLKFSKNSD). The interval 530-551 (SASWVPPSRRGISSEESKTEKK) is disordered. Residues 541 to 551 (ISSEESKTEKK) show a composition bias toward basic and acidic residues.

Belongs to the major facilitator superfamily. Sugar transporter (TC 2.A.1.1) family.

The protein resides in the membrane. Probable glucose transporter. The protein is Hexose transporter HXT13 (HXT13) of Saccharomyces cerevisiae (strain ATCC 204508 / S288c) (Baker's yeast).